The chain runs to 499 residues: Protein NODULATION SIGNALING PATHWAY 2 (499 aa).

The tract at residues 64 to 106 is disordered; the sequence is NNTGPAFSDHTASTTSEEEEEEEATTTTMTTTTTTTTTTPEAA. The segment covering 88-104 has biased composition (low complexity); sequence TTTTMTTTTTTTTTTPE. Residues 106–491 enclose the GRAS domain; the sequence is ADDDFKGLRL…RRLLSASLWT (386 aa). The tract at residues 113 to 182 is leucine repeat I (LRI); the sequence is LRLVHLLMAG…AGGAYNSSSK (70 aa). The tract at residues 201 to 265 is VHIID; sequence FQLLQDMSPY…PNGPHLRITA (65 aa). The VHIID signature appears at 232-236; that stretch reads VHIVD. A leucine repeat II (LRII) region spans residues 281 to 313; sequence ETGRRLTAFATSLGQPFSFHHSRLESDETFRPA. Residues 323–414 are PFYRE; that stretch reads LVFNCMLNLP…RVFLGPRIVG (92 aa). The segment at 417–491 is SAW; the sequence is ARIYRTGGGG…RRLLSASLWT (75 aa).

Belongs to the GRAS family. As to quaternary structure, interacts with IPN2. Binds to RAD1. Interacts with RAM1. In terms of tissue distribution, highly expressed in roots.

The protein resides in the nucleus membrane. It is found in the endoplasmic reticulum. Transcriptional regulator essential for Nod-factor-induced gene expression. Acts downstream of calcium spiking and a calcium/calmodulin-dependent protein kinase required for activation of early nodulation gene expression. Transcription factor involved in the induction of NIN and ENOD40 genes, which are required for rhizobial infection and early nodule development. Does not seem to contribute to the early steps of the arbuscular mycorrhizal fungus infection and colonization processes in roots. Transcription factor involved in the positive regulation of the beta-carotene isomerase D27, which participates in a pathway leading to biosynthesis of strigolactones in roots. This chain is Protein NODULATION SIGNALING PATHWAY 2, found in Lotus japonicus (Lotus corniculatus var. japonicus).